The primary structure comprises 414 residues: NAC domain-containing protein 35 (414 aa).

Positions 1–21 are enriched in polar residues; that stretch reads MAIVSSTTSIIPMSNQVNNNE. The segment at 1–47 is disordered; the sequence is MAIVSSTTSIIPMSNQVNNNEKGIEDNDHRGGQESHVQNEDEADDHD. Positions 22–47 are enriched in basic and acidic residues; it reads KGIEDNDHRGGQESHVQNEDEADDHD. Residues 51-198 form the NAC domain; that stretch reads VMPGFRFHPT…EISLCRVYKR (148 aa). Residues 149 to 204 mediate DNA binding; that stretch reads IGLKKTLVFYSGKAPKGTRTSWIMNEYRLPHHETEKYQKAEISLCRVYKRPGVEDH. Residues 200–251 are disordered; it reads GVEDHPSVPRSLSTRHHNHNSSTSSRLALRQQQHHSSSSNHSDNNLNNNNNI. Positions 233–251 are enriched in low complexity; it reads HHSSSSNHSDNNLNNNNNI.

Expressed in aerial organs in early stages of seedling development.

It localises to the nucleus. Functionally, transcription factor that acts as a floral repressor. Controls flowering time by negatively regulating CONSTANS (CO) expression in a GIGANTEA (GI)-independent manner. Regulates the plant cold response by positive regulation of the cold response genes COR15A and KIN1. May coordinate cold response and flowering time. The polypeptide is NAC domain-containing protein 35 (Arabidopsis thaliana (Mouse-ear cress)).